The chain runs to 860 residues: MQEQYRPEEIESKVQLHWDEKRTFEVTEDESKEKYYCLSMLPYPSGRLHMGHVRNYTIGDVVARYQRMLGKNVLQPIGWDAFGLPAEGAAVKNNTAPAPWTYDNIAYMKNQLKTLGFGYDWSREIATCTPEYYRWEQKFFTELYKKGLVYKKTSAVNWCPNDQTVLANEQVIDGCCWRCDTKVERKEIPQWFIKITAYADELLRDLDKLDHWPDTVKTMQRNWIGRSEGVEITFDVKGYDNTLTVYTTRPDTFMGATYLAVAAGHPLAQKAAANNAELAAFIDECRNTKVAEAEMATMEKKGVDTGYKAIHPLTGEEIPVWAANFVLMEYGTGAVMAVPGHDQRDYEFASKYGLTIKPVILAADGSEPDLSEQALTEKGVLFNSGEFDGLAFEAAFNAIADKLAEKGVGERKVNYRLRDWGVSRQRYWGAPIPMVTLEDGTVLPTPEDQLPVILPEDVVMDGITSPIKADPEWAKTTVNGMPALRETDTFDTFMESSWYYARYTCPQYQEGMLDSKAANYWLPVDIYIGGIEHAIMHLLYFRFFHKLMRDAGMVTSDEPAKQLLCQGMVLADAFYYVGENGERNWVSPVDAIVERDEKGRIVKAKDAAGHELVYTGMSKMSKSKNNGIDPQVMVERYGADTVRLFMMFASPADMTLEWQESGVEGANRFIKRVWKLVYEHTAKGPVAALNVDALSEDQKALRRDVHKTIAKVTDDIGRRQTFNTAIAAIMELMNKLAKAPQEGEQDRALLQEALQAVVRMLNPFTPHVCFTLWQELGGEGDIDNAPWPVADEQAMVENTTLVVVQVNGKVRGKITVAVDATEEQVRERAGQEHLVAKYLDGVTVRKVIYVPGKLLNLVVG.

Residues 42–52 (PYPSGRLHMGH) carry the 'HIGH' region motif. Residues 619–623 (KMSKS) carry the 'KMSKS' region motif. Position 622 (Lys-622) interacts with ATP.

This sequence belongs to the class-I aminoacyl-tRNA synthetase family.

The protein resides in the cytoplasm. The enzyme catalyses tRNA(Leu) + L-leucine + ATP = L-leucyl-tRNA(Leu) + AMP + diphosphate. The sequence is that of Leucine--tRNA ligase from Salmonella agona (strain SL483).